A 541-amino-acid chain; its full sequence is Cytosolic phospholipase A2 gamma (541 aa).

Residues 1 to 541 (MGSSEVSIIP…KDSARSCCLA (541 aa)) form the PLA2c domain. The active-site Nucleophile is Ser82. Residues 260–292 (LTLKGLWRRAVANAKSIGHLIFARLLRLQESSQ) form a required for lipid droplet localization region. Ser337 bears the Phosphoserine mark. The Proton acceptor role is filled by Asp385. At Cys538 the chain carries Cysteine methyl ester. Cys538 is lipidated: S-farnesyl cysteine. Residues 539–541 (CLA) constitute a propeptide, removed in mature form.

As to quaternary structure, (Microbial infection) Interacts with HCV non-structural protein 4B/NS4B; this interaction likely initiates the recruitment of replication complexes to lipid droplets. Highly expressed in heart and skeletal muscle.

It is found in the cell membrane. It localises to the endoplasmic reticulum membrane. Its subcellular location is the mitochondrion membrane. The protein resides in the lipid droplet. The catalysed reaction is a 1,2-diacyl-sn-glycero-3-phosphocholine + H2O = a 1-acyl-sn-glycero-3-phosphocholine + a fatty acid + H(+). It catalyses the reaction a 1-O-alkyl-2-acyl-sn-glycero-3-phosphocholine + H2O = a 1-O-alkyl-sn-glycero-3-phosphocholine + a fatty acid + H(+). The enzyme catalyses 1,2-dihexadecanoyl-sn-glycero-3-phosphocholine + H2O = 1-hexadecanoyl-sn-glycero-3-phosphocholine + hexadecanoate + H(+). It carries out the reaction 1-hexadecanoyl-2-(9Z-octadecenoyl)-sn-glycero-3-phosphocholine + H2O = 1-hexadecanoyl-sn-glycero-3-phosphocholine + (9Z)-octadecenoate + H(+). The catalysed reaction is 1-hexadecanoyl-2-(9Z,12Z-octadecadienoyl)-sn-glycero-3-phosphocholine + H2O = (9Z,12Z)-octadecadienoate + 1-hexadecanoyl-sn-glycero-3-phosphocholine + H(+). It catalyses the reaction 1-hexadecanoyl-2-(5Z,8Z,11Z,14Z-eicosatetraenoyl)-sn-glycero-3-phosphocholine + H2O = 1-hexadecanoyl-sn-glycero-3-phosphocholine + (5Z,8Z,11Z,14Z)-eicosatetraenoate + H(+). The enzyme catalyses 1-O-hexadecyl-2-(5Z,8Z,11Z,14Z)-eicosatetraenoyl-sn-glycero-3-phosphocholine + H2O = 1-O-hexadecyl-sn-glycero-3-phosphocholine + (5Z,8Z,11Z,14Z)-eicosatetraenoate + H(+). It carries out the reaction 1-hexadecanoyl-2-(5Z,8Z,11Z,14Z-eicosatetraenoyl)-sn-glycero-3-phosphocholine + H2O = 2-(5Z,8Z,11Z,14Z)-eicosatetraenoyl-sn-glycero-3-phosphocholine + hexadecanoate + H(+). The catalysed reaction is a 1-acyl-sn-glycero-3-phosphocholine + H2O = sn-glycerol 3-phosphocholine + a fatty acid + H(+). It catalyses the reaction 1-hexadecanoyl-sn-glycero-3-phosphocholine + H2O = sn-glycerol 3-phosphocholine + hexadecanoate + H(+). The enzyme catalyses 2 1-hexadecanoyl-sn-glycero-3-phosphocholine = 1,2-dihexadecanoyl-sn-glycero-3-phosphocholine + sn-glycerol 3-phosphocholine. It carries out the reaction 1-hexadecanoyl-sn-glycero-3-phosphoethanolamine + 1-hexadecanoyl-sn-glycero-3-phosphocholine = 1,2-dihexadecanoyl-sn-glycero-3-phosphoethanolamine + sn-glycerol 3-phosphocholine. The catalysed reaction is 1-hexadecanoyl-sn-glycero-3-phosphoethanolamine + 1-hexadecanoyl-sn-glycero-3-phosphocholine = sn-glycero-3-phosphoethanolamine + 1,2-dihexadecanoyl-sn-glycero-3-phosphocholine. It catalyses the reaction 2 1-hexadecanoyl-sn-glycero-3-phosphoethanolamine = 1,2-dihexadecanoyl-sn-glycero-3-phosphoethanolamine + sn-glycero-3-phosphoethanolamine. The enzyme catalyses 1-O-hexadecyl-sn-glycero-3-phosphocholine + 1-hexadecanoyl-sn-glycero-3-phosphocholine = 1-O-hexadecyl-2-hexadecanoyl-sn-glycero-3-phosphocholine + sn-glycerol 3-phosphocholine. It carries out the reaction a 1-O-(1Z-alkenyl)-sn-glycero-3-phosphoethanolamine + 1-hexadecanoyl-sn-glycero-3-phosphocholine = 1-O-(1Z)-alkenyl-2-hexadecanoyl-sn-glycero-3-phosphoethanolamine + sn-glycerol 3-phosphocholine. The catalysed reaction is 1-O-hexadecyl-sn-glycero-3-phosphocholine + 1-hexadecanoyl-sn-glycero-3-phosphoethanolamine = 1-O-hexadecyl-2-hexadecanoyl-sn-glycero-3-phosphocholine + sn-glycero-3-phosphoethanolamine. It catalyses the reaction 1-octadecanoyl-2-(5Z,8Z,11Z,14Z)-eicosatetraenoyl-sn-glycero-3-phosphoethanolamine + 1-hexadecanoyl-sn-glycero-3-phosphocholine = 1-octadecanoyl-sn-glycero-3-phosphoethanolamine + 1-hexadecanoyl-2-(5Z,8Z,11Z,14Z-eicosatetraenoyl)-sn-glycero-3-phosphocholine. The enzyme catalyses 1-octadecanoyl-2-(5Z,8Z,11Z,14Z)-eicosatetraenoyl-sn-glycero-3-phosphoethanolamine + 1-O-hexadecyl-sn-glycero-3-phosphocholine = 1-octadecanoyl-sn-glycero-3-phosphoethanolamine + 1-O-hexadecyl-2-(5Z,8Z,11Z,14Z)-eicosatetraenoyl-sn-glycero-3-phosphocholine. It carries out the reaction 1-hexadecanoyl-2-(9Z,12Z-octadecadienoyl)-sn-glycero-3-phosphocholine + a 1-O-(1Z-alkenyl)-sn-glycero-3-phosphoethanolamine = 1-O-(1Z-alkenyl)-2-(9Z,12Z-octadecadienoyl)-sn-glycero-3-phosphoethanolamine + 1-hexadecanoyl-sn-glycero-3-phosphocholine. The catalysed reaction is 1-hexadecanoyl-2-(5Z,8Z,11Z,14Z-eicosatetraenoyl)-sn-glycero-3-phosphocholine + a 1-O-(1Z-alkenyl)-sn-glycero-3-phosphoethanolamine = 1-O-(1Z)-alkenyl-2-(5Z,8Z,11Z,14Z)-eicosatetraenoyl-sn-glycero-3-phosphoethanolamine + 1-hexadecanoyl-sn-glycero-3-phosphocholine. With respect to regulation, not regulated by calcium, coenzyme A or ATP. Lysophospholipase activity is inhibited by palmitoyl-CoA. Lysophospholipase and O-acyltransferase activities are inhibited by methylarachidonoylfluorophosphonate. Lysophospholipase activity is inhibited by phosphatidate or lysophosphatidate. O-acyltransferase activity is up-regulated at low concentration (10-20 uM) of phosphatidate or lysophosphatidate, but inhibited at higher concentrations. Its function is as follows. Calcium-independent phospholipase, lysophospholipase and O-acyltransferase involved in phospholipid remodeling with implications in endoplasmic reticulum membrane homeostasis and lipid droplet biogenesis. Preferentially hydrolyzes the ester bond of the fatty acyl group attached at the sn-2 position of phospholipids with choline and ethanolamine head groups, producing lysophospholipids that are used in deacylation-reacylation cycles. Transfers the sn-1 fatty acyl from one lysophospholipid molecule to the sn-2 position of another lysophospholipid to form diacyl, alkylacyl and alkenylacyl glycerophospholipids. Cleaves ester bonds but not alkyl or alkenyl ether bonds at sn-1 position of lysophospholipids. Catalyzes sn-2 fatty acyl transfer from phospholipids to the sn-2 position of 1-O-alkyl or 1-O-alkenyl lysophospholipids with lower efficiency. In response to dietary fatty acids, may play a role in the formation of nascent lipid droplets from the endoplasmic reticulum likely by regulating the phospholipid composition of these organelles. In terms of biological role, (Microbial infection) May play a role in replication and assembly of human hepatitis C virus (HCV). In response to HCV infection, promotes remodeling of host endoplasmic reticulum membranes to form organelle-like structures called membranous web, where HCV replication occur. Can further mediate translocation of replication complexes to lipid droplets to enable virion assembly. (Microbial infection) May facilitate human T-lymphotropic virus type 1 (HTLV-1) infection by promoting leukotriene B4 (LTB4) biosynthesis. LTB4 acts as a chemoattractant for HTLV-1-infected CD4-positive T cells and favors cell to cell viral transmission. This is Cytosolic phospholipase A2 gamma (PLA2G4C) from Homo sapiens (Human).